Here is a 213-residue protein sequence, read N- to C-terminus: T-cell surface glycoprotein CD8 beta chain (213 aa).

A signal peptide spans 1 to 21; it reads MQPWLWLVFSMKLAALWSSSA. In terms of domain architecture, Ig-like V-type spans 22-133; that stretch reads LIQTPSSLLV…KMVFGTGTKL (112 aa). Over 22 to 175 the chain is Extracellular; sequence LIQTPSSLLV…QKGLTCSLTT (154 aa). Asn34 carries an N-linked (GlcNAc...) asparagine glycan. A disulfide bridge links Cys41 with Cys117. The helical transmembrane segment at 176–196 threads the bilayer; that stretch reads LSLLVVCILLLLAFLGVAVYF. Residues 197 to 213 are Cytoplasmic-facing; it reads YCVRRRARIHFMKQFHK.

As to quaternary structure, forms disulfide-linked heterodimers with CD8A at the cell surface. Interacts with CD3D; this interaction couples TCR-CD3 with CD8. Interacts with LCK. In terms of processing, palmitoylated at the cytoplasmic tail and thereby targets the heterodimer CD8A/CD8B to lipid rafts unlike CD8A homodimers.

The protein localises to the membrane. Functionally, integral membrane glycoprotein that plays an essential role in the immune response and serves multiple functions in responses against both external and internal offenses. In T-cells, functions primarily as a coreceptor for MHC class I molecule:peptide complex. The antigens presented by class I peptides are derived from cytosolic proteins while class II derived from extracellular proteins. Interacts simultaneously with the T-cell receptor (TCR) and the MHC class I proteins presented by antigen presenting cells (APCs). In turn, recruits the Src kinase LCK to the vicinity of the TCR-CD3 complex. A palmitoylation site in the cytoplasmic tail of CD8B chain contributes to partitioning of CD8 into the plasma membrane lipid rafts where signaling proteins are enriched. Once LCK recruited, it initiates different intracellular signaling pathways by phosphorylating various substrates ultimately leading to lymphokine production, motility, adhesion and activation of cytotoxic T-lymphocytes (CTLs). Additionally, plays a critical role in thymic selection of CD8+ T-cells. In Mus musculus (Mouse), this protein is T-cell surface glycoprotein CD8 beta chain (Cd8b).